The primary structure comprises 310 residues: Protoheme IX farnesyltransferase 2 (310 aa).

9 helical membrane-spanning segments follow: residues 25–45 (PGIIFGNLISVAGGFLLAAKG), 49–69 (LVLMLASLVGLSLVVASGCAI), 98–118 (HVLLFGIAIGVLGFGILALFT), 121–141 (LALLFAAIGYVVYVGIYSLYM), 145–165 (SVYGTLVGSFSGAVPPVVGYC), 176–196 (VILLLMFSLWQMPHSYAIAIF), 222–242 (IVLYIAVFALVSTMLPLAGYT), 245–265 (AFMAVTCATSLWWLTMALKGY), and 277–297 (QVFGFSIITITALSVTMALDF).

This sequence belongs to the UbiA prenyltransferase family. Protoheme IX farnesyltransferase subfamily.

The protein localises to the cell inner membrane. The enzyme catalyses heme b + (2E,6E)-farnesyl diphosphate + H2O = Fe(II)-heme o + diphosphate. Its pathway is porphyrin-containing compound metabolism; heme O biosynthesis; heme O from protoheme: step 1/1. Its function is as follows. Converts heme B (protoheme IX) to heme O by substitution of the vinyl group on carbon 2 of heme B porphyrin ring with a hydroxyethyl farnesyl side group. The protein is Protoheme IX farnesyltransferase 2 of Shewanella sp. (strain MR-7).